A 234-amino-acid polypeptide reads, in one-letter code: Zinc transport system ATP-binding protein AdcC (234 aa).

The ABC transporter domain maps to 4–234 (ITVEDLSFYY…HENGQEVGHA (231 aa)). Residue 36 to 43 (GENGAAKT) participates in ATP binding.

Belongs to the ABC transporter superfamily.

Functionally, part of the ATP-driven transport system AdcABC for zinc. Required for transformability. The chain is Zinc transport system ATP-binding protein AdcC (adcC) from Streptococcus pneumoniae (strain ATCC BAA-255 / R6).